Here is a 546-residue protein sequence, read N- to C-terminus: Chaperonin GroEL (546 aa).

Residues 29–32, 86–90, Gly413, 476–478, and Asp492 each bind ATP; these read TLGP, DGTTT, and NAA. The interval 521–546 is disordered; that stretch reads RPDESGNDAGAGAQGMDPSMMGGGMM.

The protein belongs to the chaperonin (HSP60) family. Forms a cylinder of 14 subunits composed of two heptameric rings stacked back-to-back. Interacts with the co-chaperonin GroES.

It localises to the cytoplasm. The enzyme catalyses ATP + H2O + a folded polypeptide = ADP + phosphate + an unfolded polypeptide.. Together with its co-chaperonin GroES, plays an essential role in assisting protein folding. The GroEL-GroES system forms a nano-cage that allows encapsulation of the non-native substrate proteins and provides a physical environment optimized to promote and accelerate protein folding. The chain is Chaperonin GroEL from Tetragenococcus halophilus (Pediococcus halophilus).